Consider the following 369-residue polypeptide: Probable methyltransferase TCM_000331 (369 aa).

7 residues coordinate S-adenosyl-L-homocysteine: Tyr-18, Cys-60, Asn-65, Asp-98, Leu-99, Ser-137, and Phe-138. Mg(2+)-binding residues include Asn-176, Asp-261, Phe-263, and Asn-264.

Belongs to the methyltransferase superfamily. Type-7 methyltransferase family. Mg(2+) serves as cofactor.

This Theobroma cacao (Cacao) protein is Probable methyltransferase TCM_000331.